We begin with the raw amino-acid sequence, 433 residues long: QFSPNLSFSAFFPIITFTTATMGFQKIKVANPIVEMDGDEMTRIIWKYIKDKLIFPFVELDIKYFDLGLPYRDETNDKVTVESAEATLKYNVAIKCATITPDEARVKEFGLKSMWRSPNGTIRNILNGTVFREPIICKNIPRLIPGWTKPICIGRHAFGDQYRATDSVIKGPGKLKLVFVPEGQGETTDLEVYNFTGEGGVALAMYNTDESIRSFAEASMAVALEKKWPLYLSTKNTILKKYDGRFKDIFQEVYEAGWKSKYEAAGIWYEHRLIDDMVAYALKSEGGYVWACKNYDGDVQSDFLAQGFGSLGLMTSVLVCPDGKTIEAEAAHGTVTRHFRVHQKGGETSTNSIASIFAWTRGLAHRAKLDDNATLLDFTEKLEAACIGVVESGKMTKDLALILHGSKLSREHYLNTEEFIDAVAAELKTKISA.

The transit peptide at 1-21 (QFSPNLSFSAFFPIITFTTAT) directs the protein to the chloroplast. NADP(+) contacts are provided by residues 98–100 (TIT) and Arg-105. Thr-100 contacts substrate. Substrate contacts are provided by residues 117–123 (SPNGTIR), Arg-132, and Arg-155. Asp-275 contributes to the Mn(2+) binding site. NADP(+) is bound at residue Lys-283. Asp-298 serves as a coordination point for Mn(2+). Residues 333 to 338 (GTVTRH) and Asn-351 contribute to the NADP(+) site.

It belongs to the isocitrate and isopropylmalate dehydrogenases family. Mg(2+) serves as cofactor. The cofactor is Mn(2+). In terms of tissue distribution, detected in all tissues examined.

The protein resides in the plastid. The protein localises to the chloroplast. It carries out the reaction D-threo-isocitrate + NADP(+) = 2-oxoglutarate + CO2 + NADPH. In Medicago sativa (Alfalfa), this protein is Isocitrate dehydrogenase [NADP], chloroplastic.